The primary structure comprises 358 residues: tRNA-specific 2-thiouridylase MnmA (358 aa).

ATP contacts are provided by residues 6–13 (ALSGGVDS) and M32. Catalysis depends on C103, which acts as the Nucleophile. Cysteines 103 and 201 form a disulfide. G127 provides a ligand contact to ATP. An interaction with tRNA region spans residues 151–153 (KDQ). The active-site Cysteine persulfide intermediate is C201.

This sequence belongs to the MnmA/TRMU family.

Its subcellular location is the cytoplasm. The catalysed reaction is S-sulfanyl-L-cysteinyl-[protein] + uridine(34) in tRNA + AH2 + ATP = 2-thiouridine(34) in tRNA + L-cysteinyl-[protein] + A + AMP + diphosphate + H(+). Its function is as follows. Catalyzes the 2-thiolation of uridine at the wobble position (U34) of tRNA, leading to the formation of s(2)U34. This chain is tRNA-specific 2-thiouridylase MnmA, found in Thermotoga neapolitana (strain ATCC 49049 / DSM 4359 / NBRC 107923 / NS-E).